The sequence spans 38 residues: Large ribosomal subunit protein bL36 (38 aa).

The protein belongs to the bacterial ribosomal protein bL36 family.

This Prosthecochloris aestuarii (strain DSM 271 / SK 413) protein is Large ribosomal subunit protein bL36.